Here is a 119-residue protein sequence, read N- to C-terminus: Mitochondrial coiled-coil domain protein 1 (119 aa).

The transit peptide at Met-1–Ala-24 directs the protein to the mitochondrion. The disordered stretch occupies residues Pro-25–Ala-65. The segment covering Cys-31–Met-52 has biased composition (polar residues). The stretch at His-62–Gly-116 forms a coiled coil.

As to expression, widely expressed. Expressed in adult and fetal liver, kidney and lung. Expressed in fetal brain. Weakly expressed in fetal spleen.

It is found in the mitochondrion. The sequence is that of Mitochondrial coiled-coil domain protein 1 (MCCD1) from Homo sapiens (Human).